Consider the following 232-residue polypeptide: Ornithine carbamoyltransferase (232 aa).

Carbamoyl phosphate contacts are provided by residues Q15, R39, and 66-69; that span reads HPTQ. L-ornithine is bound by residues N99, D163, and 167–168; that span reads SM. Carbamoyl phosphate-binding positions include 204–207 and T232; that span reads HCLP.

This sequence belongs to the aspartate/ornithine carbamoyltransferase superfamily. OTCase family.

The protein localises to the cytoplasm. It catalyses the reaction carbamoyl phosphate + L-ornithine = L-citrulline + phosphate + H(+). The protein operates within amino-acid biosynthesis; L-arginine biosynthesis; L-arginine from L-ornithine and carbamoyl phosphate: step 1/3. Reversibly catalyzes the transfer of the carbamoyl group from carbamoyl phosphate (CP) to the N(epsilon) atom of ornithine (ORN) to produce L-citrulline. The protein is Ornithine carbamoyltransferase (argF) of Neisseria subflava.